Here is a 100-residue protein sequence, read N- to C-terminus: Urease subunit gamma (100 aa).

It belongs to the urease gamma subunit family. As to quaternary structure, heterotrimer of UreA (gamma), UreB (beta) and UreC (alpha) subunits. Three heterotrimers associate to form the active enzyme.

The protein resides in the cytoplasm. It catalyses the reaction urea + 2 H2O + H(+) = hydrogencarbonate + 2 NH4(+). The protein operates within nitrogen metabolism; urea degradation; CO(2) and NH(3) from urea (urease route): step 1/1. In Laribacter hongkongensis (strain HLHK9), this protein is Urease subunit gamma.